Reading from the N-terminus, the 402-residue chain is Phytoene synthase 2, chloroplastic (402 aa).

The transit peptide at 1–54 (MAAGSSAVWAAQHPACSGGKFHHLSPSHSHCRPRRALQTPPALPARRSGASPPR) directs the protein to the chloroplast. Residues 20-35 (KFHHLSPSHSHCRPRR) are compositionally biased toward basic residues. A disordered region spans residues 20 to 54 (KFHHLSPSHSHCRPRRALQTPPALPARRSGASPPR). Residues 44 to 54 (PARRSGASPPR) are compositionally biased toward low complexity.

It belongs to the phytoene/squalene synthase family. In terms of tissue distribution, expressed in leaves and endosperm.

It is found in the plastid. Its subcellular location is the chloroplast. The protein resides in the plastoglobule. The enzyme catalyses 2 (2E,6E,10E)-geranylgeranyl diphosphate = 15-cis-phytoene + 2 diphosphate. Catalyzes the conversion of geranylgeranyl diphosphate to phytoene. Mediates the first committed step in carotenoid biosynthesis. The chain is Phytoene synthase 2, chloroplastic from Zea mays (Maize).